Consider the following 429-residue polypeptide: Adenylosuccinate synthetase (429 aa).

Residues 12 to 18 (GDEGKGK) and 40 to 42 (GHT) each bind GTP. Asp-13 (proton acceptor) is an active-site residue. Asp-13 and Gly-40 together coordinate Mg(2+). Residues 13-16 (DEGK), 38-41 (NAGH), Thr-128, Arg-142, Gln-223, Thr-238, and Arg-302 contribute to the IMP site. The Proton donor role is filled by His-41. 298–304 (TVTGRPR) serves as a coordination point for substrate. GTP contacts are provided by residues Arg-304, 330–332 (LLD), and 412–414 (SVG).

It belongs to the adenylosuccinate synthetase family. As to quaternary structure, homodimer. Requires Mg(2+) as cofactor.

The protein resides in the cytoplasm. It catalyses the reaction IMP + L-aspartate + GTP = N(6)-(1,2-dicarboxyethyl)-AMP + GDP + phosphate + 2 H(+). It participates in purine metabolism; AMP biosynthesis via de novo pathway; AMP from IMP: step 1/2. Plays an important role in the de novo pathway of purine nucleotide biosynthesis. Catalyzes the first committed step in the biosynthesis of AMP from IMP. This is Adenylosuccinate synthetase from Limosilactobacillus fermentum (strain NBRC 3956 / LMG 18251) (Lactobacillus fermentum).